We begin with the raw amino-acid sequence, 314 residues long: Mycothiol acetyltransferase (314 aa).

2 N-acetyltransferase domains span residues 18 to 156 (ATIR…RPLA) and 168 to 314 (IRIA…MYQL). Glu38 contacts 1D-myo-inositol 2-(L-cysteinylamino)-2-deoxy-alpha-D-glucopyranoside. 92–94 (VVV) contacts acetyl-CoA. 3 residues coordinate 1D-myo-inositol 2-(L-cysteinylamino)-2-deoxy-alpha-D-glucopyranoside: Glu195, Lys234, and Glu248. Residues 252–254 (VGL) and 259–265 (QGHGLGR) contribute to the acetyl-CoA site. Tyr286 contacts 1D-myo-inositol 2-(L-cysteinylamino)-2-deoxy-alpha-D-glucopyranoside.

It belongs to the acetyltransferase family. MshD subfamily. As to quaternary structure, monomer.

It catalyses the reaction 1D-myo-inositol 2-(L-cysteinylamino)-2-deoxy-alpha-D-glucopyranoside + acetyl-CoA = mycothiol + CoA + H(+). Catalyzes the transfer of acetyl from acetyl-CoA to desacetylmycothiol (Cys-GlcN-Ins) to form mycothiol. The protein is Mycothiol acetyltransferase of Catenulispora acidiphila (strain DSM 44928 / JCM 14897 / NBRC 102108 / NRRL B-24433 / ID139908).